The chain runs to 130 residues: Probable pilin MJ0835.1 (130 aa).

Positions M1 to A14 are excised as a propeptide. A QXSXEXXXL motif is present at residues Q15–L23.

In terms of processing, the N-terminus is cleaved by the prepilin peptidase EppA, which recognizes the class III signal sequence.

It is found in the secreted. It localises to the cell surface. The protein resides in the fimbrium. The chain is Probable pilin MJ0835.1 from Methanocaldococcus jannaschii (strain ATCC 43067 / DSM 2661 / JAL-1 / JCM 10045 / NBRC 100440) (Methanococcus jannaschii).